We begin with the raw amino-acid sequence, 459 residues long: Cysteine--tRNA ligase (459 aa).

Position 28 (Cys28) interacts with Zn(2+). The short motif at 30-40 (VTVYDLCHIGH) is the 'HIGH' region element. Zn(2+) contacts are provided by Cys209, His234, and Glu238. The short motif at 266-270 (KMSKS) is the 'KMSKS' region element. Lys269 is an ATP binding site.

Belongs to the class-I aminoacyl-tRNA synthetase family. In terms of assembly, monomer. It depends on Zn(2+) as a cofactor.

It is found in the cytoplasm. It catalyses the reaction tRNA(Cys) + L-cysteine + ATP = L-cysteinyl-tRNA(Cys) + AMP + diphosphate. The sequence is that of Cysteine--tRNA ligase from Shewanella oneidensis (strain ATCC 700550 / JCM 31522 / CIP 106686 / LMG 19005 / NCIMB 14063 / MR-1).